The primary structure comprises 265 residues: Cyclin-C (265 aa).

Residues 48–151 (IQVLGEQLKL…LLENLDCCLI (104 aa)) form the Cyclin N-terminal domain.

The protein belongs to the cyclin family. Cyclin C subfamily. In terms of assembly, component of the Cdk8 module of the Mediator complex.

It localises to the nucleus. Component of the Mediator complex, a coactivator involved in regulated gene transcription of nearly all RNA polymerase II-dependent genes. Mediator functions as a bridge to convey information from gene-specific regulatory proteins to the basal RNA polymerase II transcription machinery. Mediator is recruited to promoters by direct interactions with regulatory proteins and serves as a scaffold for the assembly of a functional preinitiation complex with RNA polymerase II and the general transcription factors. Binds to and activates cyclin-dependent kinase Cdk8 that phosphorylates the CTD (C-terminal domain) of the large subunit of RNA polymerase II (RNAp II), which may inhibit the formation of a transcription initiation complex. This chain is Cyclin-C (CycC), found in Aedes aegypti (Yellowfever mosquito).